Reading from the N-terminus, the 159-residue chain is Probable RNA-binding protein EIF1AD (159 aa).

An S1-like domain is found at 18–93 (MMEDDYALPT…VKAEICKILT (76 aa)). The tract at residues 109–159 (KFTKKPVQEEATSQNKDDSDFEDDLLPNTNRPVNRDSSDEEEDEETSSEED) is disordered. The span at 146–159 (SDEEEDEETSSEED) shows a compositional bias: acidic residues.

It belongs to the EIF1AD family.

The chain is Probable RNA-binding protein EIF1AD from Drosophila melanogaster (Fruit fly).